A 145-amino-acid polypeptide reads, in one-letter code: Small ribosomal subunit protein bS6 (145 aa).

It belongs to the bacterial ribosomal protein bS6 family.

Its function is as follows. Binds together with bS18 to 16S ribosomal RNA. The chain is Small ribosomal subunit protein bS6 from Mycoplasmopsis agalactiae (strain NCTC 10123 / CIP 59.7 / PG2) (Mycoplasma agalactiae).